The sequence spans 24 residues: Protein YahV (24 aa).

Residues 4 to 24 traverse the membrane as a helical segment; it reads ILLNVLNIVFIGIAIILVIIC.

The protein localises to the cell inner membrane. In Escherichia coli (strain K12), this protein is Protein YahV.